We begin with the raw amino-acid sequence, 260 residues long: Cytochrome c oxidase subunit 3 (260 aa).

The Mitochondrial matrix segment spans residues 1-15; that stretch reads MAHQAHAYHMVDPSP. The helical transmembrane segment at 16–34 threads the bilayer; it reads WPLTGAVAALLLTSGLAMW. At 35 to 40 the chain is on the mitochondrial intermembrane side; sequence FHFGSM. Residues 41–66 traverse the membrane as a helical segment; it reads ILLTLGLITMVLTMIQWWRDVIREGT. Topologically, residues 67-72 are mitochondrial matrix; that stretch reads FQGHHT. A helical membrane pass occupies residues 73 to 105; it reads PPVQKGLRYGMILFITSEVFFFIGFFWAFYNSS. Over 106–128 the chain is Mitochondrial intermembrane; the sequence is LAPTYELGECWPPTGITPLNPFE. The helical transmembrane segment at 129–152 threads the bilayer; sequence VPLLNTAVLLASGVTVTWAHHSIM. Residues 153–155 are Mitochondrial matrix-facing; that stretch reads HGD. A helical membrane pass occupies residues 156-183; that stretch reads RKEAIQSLTLTILLGLYFTALQAMEYYE. The Mitochondrial intermembrane portion of the chain corresponds to 184 to 190; sequence APFTIAD. Residues 191-223 form a helical membrane-spanning segment; that stretch reads GVYGSTFFVATGFHGLHVIIGSLFLSVCLLRQI. Residues 224–232 are Mitochondrial matrix-facing; that stretch reads QYHFTSKHH. Residues 233 to 255 traverse the membrane as a helical segment; sequence FGFEAAWYWHFVDVVWLFLYVSI. Residues 256–260 lie on the Mitochondrial intermembrane side of the membrane; that stretch reads YWWGS.

It belongs to the cytochrome c oxidase subunit 3 family. Component of the cytochrome c oxidase (complex IV, CIV), a multisubunit enzyme composed of 14 subunits. The complex is composed of a catalytic core of 3 subunits MT-CO1, MT-CO2 and MT-CO3, encoded in the mitochondrial DNA, and 11 supernumerary subunits COX4I, COX5A, COX5B, COX6A, COX6B, COX6C, COX7A, COX7B, COX7C, COX8 and NDUFA4, which are encoded in the nuclear genome. The complex exists as a monomer or a dimer and forms supercomplexes (SCs) in the inner mitochondrial membrane with NADH-ubiquinone oxidoreductase (complex I, CI) and ubiquinol-cytochrome c oxidoreductase (cytochrome b-c1 complex, complex III, CIII), resulting in different assemblies (supercomplex SCI(1)III(2)IV(1) and megacomplex MCI(2)III(2)IV(2)).

It is found in the mitochondrion inner membrane. The enzyme catalyses 4 Fe(II)-[cytochrome c] + O2 + 8 H(+)(in) = 4 Fe(III)-[cytochrome c] + 2 H2O + 4 H(+)(out). In terms of biological role, component of the cytochrome c oxidase, the last enzyme in the mitochondrial electron transport chain which drives oxidative phosphorylation. The respiratory chain contains 3 multisubunit complexes succinate dehydrogenase (complex II, CII), ubiquinol-cytochrome c oxidoreductase (cytochrome b-c1 complex, complex III, CIII) and cytochrome c oxidase (complex IV, CIV), that cooperate to transfer electrons derived from NADH and succinate to molecular oxygen, creating an electrochemical gradient over the inner membrane that drives transmembrane transport and the ATP synthase. Cytochrome c oxidase is the component of the respiratory chain that catalyzes the reduction of oxygen to water. Electrons originating from reduced cytochrome c in the intermembrane space (IMS) are transferred via the dinuclear copper A center (CU(A)) of subunit 2 and heme A of subunit 1 to the active site in subunit 1, a binuclear center (BNC) formed by heme A3 and copper B (CU(B)). The BNC reduces molecular oxygen to 2 water molecules using 4 electrons from cytochrome c in the IMS and 4 protons from the mitochondrial matrix. This is Cytochrome c oxidase subunit 3 (mt-co3) from Xenopus laevis (African clawed frog).